Reading from the N-terminus, the 236-residue chain is Adenylate dimethylallyltransferase (236 aa).

Belongs to the isopentenyl transferase family.

The enzyme catalyses dimethylallyl diphosphate + AMP = N(6)-(dimethylallyl)adenosine 5'-phosphate + diphosphate. Its function is as follows. Transfers dimethylallyl groups to AMP as part of the biosynthesis of cytokinin phytohormones. The polypeptide is Adenylate dimethylallyltransferase (ipt) (Pantoea agglomerans pv. gypsophilae (Erwinia herbicola)).